The following is a 147-amino-acid chain: Deoxyuridine 5'-triphosphate nucleotidohydrolase (147 aa).

Substrate is bound by residues 67 to 69, asparagine 80, and 84 to 86; these read RSG and TID.

It belongs to the dUTPase family. Mg(2+) serves as cofactor.

The catalysed reaction is dUTP + H2O = dUMP + diphosphate + H(+). It participates in pyrimidine metabolism; dUMP biosynthesis; dUMP from dCTP (dUTP route): step 2/2. In terms of biological role, this enzyme is involved in nucleotide metabolism: it produces dUMP, the immediate precursor of thymidine nucleotides and it decreases the intracellular concentration of dUTP so that uracil cannot be incorporated into DNA. The protein is Deoxyuridine 5'-triphosphate nucleotidohydrolase of Anaeromyxobacter sp. (strain Fw109-5).